Reading from the N-terminus, the 65-residue chain is Venom protein Vn4.6 (65 aa).

Positions Met1–Ala23 are cleaved as a signal peptide.

In terms of processing, contains 2 disulfide bonds. As to expression, expressed by the venom gland.

It is found in the secreted. Endoparasitoid venom protein that interferes with the activation of host hemolymph prophenoloxidase. May act in conjunction with other venom proteins (such as Vn50), by competitive binding to the zymogen and thereby interrupting the enzyme. The polypeptide is Venom protein Vn4.6 (Cotesia rubecula (Cabbage white butterfly parasite)).